A 205-amino-acid chain; its full sequence is Holliday junction branch migration complex subunit RuvA (205 aa).

Residues 1–67 form a domain I region; sequence MIGWLKGDVQ…ADNLQLFGFL (67 aa). Residues 68 to 146 are domain II; sequence QLAERDLFRE…DSVASTGPER (79 aa). Positions 147 to 155 are flexible linker; sequence NQLDPVAPD. A domain III region spans residues 155 to 205; the sequence is DLIATLETLGFETHEIRDALQRLNGMGGPQDGDDDDAWLRACIKLMSSTDP.

Belongs to the RuvA family. As to quaternary structure, homotetramer. Forms an RuvA(8)-RuvB(12)-Holliday junction (HJ) complex. HJ DNA is sandwiched between 2 RuvA tetramers; dsDNA enters through RuvA and exits via RuvB. An RuvB hexamer assembles on each DNA strand where it exits the tetramer. Each RuvB hexamer is contacted by two RuvA subunits (via domain III) on 2 adjacent RuvB subunits; this complex drives branch migration. In the full resolvosome a probable DNA-RuvA(4)-RuvB(12)-RuvC(2) complex forms which resolves the HJ.

The protein resides in the cytoplasm. Functionally, the RuvA-RuvB-RuvC complex processes Holliday junction (HJ) DNA during genetic recombination and DNA repair, while the RuvA-RuvB complex plays an important role in the rescue of blocked DNA replication forks via replication fork reversal (RFR). RuvA specifically binds to HJ cruciform DNA, conferring on it an open structure. The RuvB hexamer acts as an ATP-dependent pump, pulling dsDNA into and through the RuvAB complex. HJ branch migration allows RuvC to scan DNA until it finds its consensus sequence, where it cleaves and resolves the cruciform DNA. The protein is Holliday junction branch migration complex subunit RuvA of Parasynechococcus marenigrum (strain WH8102).